The chain runs to 149 residues: MLHTTIILLVIALLSLVAKDLVLVYASLLLLGLSLLKAVPVMDAIQKPMFHVGLFCLMVFLLIPIAKGKYDFISLGKEMVSWKATIAILAGFIISYVGGKGLSILPDQPVVFIGVTIGTLLAVLLSNGLPAGLIIAAGCIALLSRIFNF.

4 consecutive transmembrane segments (helical) span residues 6-26, 48-68, 86-106, and 120-140; these read IILLVIALLSLVAKDLVLVYA, PMFHVGLFCLMVFLLIPIAKG, IAILAGFIISYVGGKGLSILP, and LLAVLLSNGLPAGLIIAAGCI.

This sequence belongs to the UPF0756 family.

The protein resides in the cell membrane. The protein is UPF0756 membrane protein BBR47_12340 of Brevibacillus brevis (strain 47 / JCM 6285 / NBRC 100599).